Here is a 330-residue protein sequence, read N- to C-terminus: Inorganic pyrophosphatase 2, mitochondrial (330 aa).

The transit peptide at 1-27 (MRALLPLLSVGRGWRVGAAARPPRRVM) directs the protein to the mitochondrion. Mg(2+) is bound by residues aspartate 159, aspartate 164, and aspartate 196. N6-succinyllysine is present on lysine 211. Position 219 is an N6-acetyllysine (lysine 219). An N6-succinyllysine modification is found at lysine 254. Lysine 256 carries the post-translational modification N6-acetyllysine.

Belongs to the PPase family. In terms of assembly, homodimer. Requires Mg(2+) as cofactor.

It is found in the mitochondrion. The enzyme catalyses diphosphate + H2O = 2 phosphate + H(+). Hydrolyzes inorganic pyrophosphate. This activity is essential for correct regulation of mitochondrial membrane potential, and mitochondrial organization and function. The protein is Inorganic pyrophosphatase 2, mitochondrial (Ppa2) of Mus musculus (Mouse).